The sequence spans 338 residues: Anthranilate phosphoribosyltransferase (338 aa).

Residues Gly-81, 84–85, Thr-89, 91–94, 109–117, and Thr-121 contribute to the 5-phospho-alpha-D-ribose 1-diphosphate site; these read GD, NIST, and KHGNRAQSS. Gly-81 provides a ligand contact to anthranilate. Mg(2+) is bound at residue Ser-93. Residue Asn-112 coordinates anthranilate. Residue Arg-167 coordinates anthranilate. Mg(2+) is bound by residues Asp-225 and Glu-226.

It belongs to the anthranilate phosphoribosyltransferase family. As to quaternary structure, homodimer. Mg(2+) serves as cofactor.

The catalysed reaction is N-(5-phospho-beta-D-ribosyl)anthranilate + diphosphate = 5-phospho-alpha-D-ribose 1-diphosphate + anthranilate. The protein operates within amino-acid biosynthesis; L-tryptophan biosynthesis; L-tryptophan from chorismate: step 2/5. Catalyzes the transfer of the phosphoribosyl group of 5-phosphorylribose-1-pyrophosphate (PRPP) to anthranilate to yield N-(5'-phosphoribosyl)-anthranilate (PRA). This Rhizobium rhizogenes (strain K84 / ATCC BAA-868) (Agrobacterium radiobacter) protein is Anthranilate phosphoribosyltransferase.